The primary structure comprises 264 residues: MRLVPLDCAEQVSRWAARYIVDKINAFQPTAEKPFVLGLPTGGTPLQTYKELIKLYQAGEVSFKHVVTFNMDEYVGLPPEHKESYHYFMFHNFFNHIDIPVENVNILNGMAEDVDAECERYEAKIRSYGKIHLFMGGVGVDGHIAFNEPASSLSSRTRIKTLTEDTLIANSRFFDNDVNKVPKFALTVGVGTLMDAEEVLILVTGYNKALALQACVEGAVNHLWTISALQLHRRAVVVCDEPATQELKVKTVKYFKQLEQNIAR.

D72 acts as the Proton acceptor; for enolization step in catalysis. D141 serves as the catalytic For ring-opening step. H143 functions as the Proton acceptor; for ring-opening step in the catalytic mechanism. E148 acts as the For ring-opening step in catalysis.

This sequence belongs to the glucosamine/galactosamine-6-phosphate isomerase family. NagB subfamily. In terms of assembly, homohexamer.

The enzyme catalyses alpha-D-glucosamine 6-phosphate + H2O = beta-D-fructose 6-phosphate + NH4(+). The protein operates within amino-sugar metabolism; N-acetylneuraminate degradation; D-fructose 6-phosphate from N-acetylneuraminate: step 5/5. With respect to regulation, allosterically activated by N-acetylglucosamine 6-phosphate (GlcNAc6P). Functionally, catalyzes the reversible isomerization-deamination of glucosamine 6-phosphate (GlcN6P) to form fructose 6-phosphate (Fru6P) and ammonium ion. This is Glucosamine-6-phosphate deaminase from Glaesserella parasuis serovar 5 (strain SH0165) (Haemophilus parasuis).